A 322-amino-acid chain; its full sequence is uncharacterized protein (322 aa).

The helical transmembrane segment at 299–319 (GLLLEGTIVALILLEIILALA) threads the bilayer.

It localises to the membrane. This is an uncharacterized protein from Methanocaldococcus jannaschii (strain ATCC 43067 / DSM 2661 / JAL-1 / JCM 10045 / NBRC 100440) (Methanococcus jannaschii).